Here is a 276-residue protein sequence, read N- to C-terminus: Large ribosomal subunit protein uL2 (276 aa).

2 disordered regions span residues 14 to 58 and 219 to 276; these read RNAS…GGGH and PITR…KNRK. Residues 16 to 27 are compositionally biased toward polar residues; sequence ASVSDFSELTRS. Residues 255 to 276 show a composition bias toward basic residues; that stretch reads RRPKKASNKMIVRRRPSGKNRK.

Belongs to the universal ribosomal protein uL2 family. In terms of assembly, part of the 50S ribosomal subunit. Forms a bridge to the 30S subunit in the 70S ribosome.

Functionally, one of the primary rRNA binding proteins. Required for association of the 30S and 50S subunits to form the 70S ribosome, for tRNA binding and peptide bond formation. It has been suggested to have peptidyltransferase activity; this is somewhat controversial. Makes several contacts with the 16S rRNA in the 70S ribosome. The polypeptide is Large ribosomal subunit protein uL2 (Bifidobacterium longum (strain DJO10A)).